The following is a 170-amino-acid chain: Adenine phosphoribosyltransferase (170 aa).

The protein belongs to the purine/pyrimidine phosphoribosyltransferase family. As to quaternary structure, homodimer.

It localises to the cytoplasm. It carries out the reaction AMP + diphosphate = 5-phospho-alpha-D-ribose 1-diphosphate + adenine. It functions in the pathway purine metabolism; AMP biosynthesis via salvage pathway; AMP from adenine: step 1/1. Its function is as follows. Catalyzes a salvage reaction resulting in the formation of AMP, that is energically less costly than de novo synthesis. The chain is Adenine phosphoribosyltransferase from Cenarchaeum symbiosum (strain A).